An 874-amino-acid polypeptide reads, in one-letter code: MKAAEIREKFLKFFESKGHTIVRSSSLVPGNDPTLMFTNSGMVQFKDVFLGTDPRPYSRATTAQRSVRAGGKHNDLENVGYTARHHTFFEMLGNFSFGDYFKHDAIKFAWELLTTVYQLPKDKLWVTVYQEDDEAYDIWAKEVGVPTERIIRIGDNKGARYASDNFWTMGDTGPCGPCTEIFYDHGPDVWGGPPGSPEEDGDRYIEIWNLVFMQFNRDAQGNMTRLPKQSVDTGMGLERLAAVLQHVHSNYEIDLFQNLIKAAARVTEISDLTNNSLKVIADHIRACSFLIVDGVIPGNEGRGYVLRRIVRRAIRHGYKLGRKGSFFHKLVADLVAEMGVAYPELKEAEQRVTDVLRQEEERFFETIEHGMSILEGALADVEAKGGKVLDGELAFKLHDTYGFPLDLTADVCRERGMTVDEPAFDDAMARQREQARAAGKFKAAQGLEYTGAKTTFHGYEEIAFDDAKIVALYVDGSSVNEVKTGQDAVVVLDHTPFYAESGGQVGDQGVLANAATRFAVADTLKVQADVIGHHGTLEQGTLKVGDVLRAEIDAHRRARTQRNHSATHLMHKALREVLGAHVQQKGSLVDAEKTRFDFAHNAPMTDDEIRRVEQIVNNEILANAPGIVRVMPYDEAVKGGAMALFGEKYGDEVRVLDLGFSRELCGGTHVSRSGDIGFFKIVVEGGVAAGIRRVEAITGDNAVRYVQELDARVNEAAAALKAQPSELTQRIAQVQDQVKSLEKELGALKSKLASSQGDELAQQAVEIGGVFVLAATLDGADAKTLRETVDKLKDKLKSAAIVLAAVESGKVSLIAGVTPDASKKVKAGELVNFVAQQVGGKGGGRPDMAQAGGTEPANLPGALAGVKGWVEERL.

Residues histidine 564, histidine 568, cysteine 665, and histidine 669 each coordinate Zn(2+).

The protein belongs to the class-II aminoacyl-tRNA synthetase family. It depends on Zn(2+) as a cofactor.

The protein resides in the cytoplasm. The catalysed reaction is tRNA(Ala) + L-alanine + ATP = L-alanyl-tRNA(Ala) + AMP + diphosphate. Catalyzes the attachment of alanine to tRNA(Ala) in a two-step reaction: alanine is first activated by ATP to form Ala-AMP and then transferred to the acceptor end of tRNA(Ala). Also edits incorrectly charged Ser-tRNA(Ala) and Gly-tRNA(Ala) via its editing domain. The polypeptide is Alanine--tRNA ligase (Burkholderia lata (strain ATCC 17760 / DSM 23089 / LMG 22485 / NCIMB 9086 / R18194 / 383)).